Here is a 296-residue protein sequence, read N- to C-terminus: GTPase Era (296 aa).

In terms of domain architecture, Era-type G spans 3-170 (KSGFITIVGR…LELMVKYLPE (168 aa)). The interval 11–18 (GRPNVGKS) is G1. A GTP-binding site is contributed by 11 to 18 (GRPNVGKS). The tract at residues 37 to 41 (QTTRN) is G2. A G3 region spans residues 58–61 (DTPG). Residues 58–62 (DTPGI) and 120–123 (NKVD) contribute to the GTP site. The interval 120 to 123 (NKVD) is G4. The interval 149–151 (ISA) is G5. One can recognise a KH type-2 domain in the interval 201–278 (LSQEVPHGIA…NIKIWVKVRK (78 aa)).

The protein belongs to the TRAFAC class TrmE-Era-EngA-EngB-Septin-like GTPase superfamily. Era GTPase family. As to quaternary structure, monomer.

The protein resides in the cytoplasm. It is found in the cell membrane. An essential GTPase that binds both GDP and GTP, with rapid nucleotide exchange. Plays a role in 16S rRNA processing and 30S ribosomal subunit biogenesis and possibly also in cell cycle regulation and energy metabolism. The sequence is that of GTPase Era from Clostridium perfringens (strain ATCC 13124 / DSM 756 / JCM 1290 / NCIMB 6125 / NCTC 8237 / Type A).